Consider the following 288-residue polypeptide: Light-independent protochlorophyllide reductase iron-sulfur ATP-binding protein (288 aa).

ATP contacts are provided by residues 10 to 15 and Lys39; that span reads GIGKST. Ser14 is a binding site for Mg(2+). Residues Cys95 and Cys129 each contribute to the [4Fe-4S] cluster site. 180–181 contacts ATP; sequence NR.

It belongs to the NifH/BchL/ChlL family. Homodimer. Protochlorophyllide reductase is composed of three subunits; ChlL, ChlN and ChlB. [4Fe-4S] cluster serves as cofactor.

It carries out the reaction chlorophyllide a + oxidized 2[4Fe-4S]-[ferredoxin] + 2 ADP + 2 phosphate = protochlorophyllide a + reduced 2[4Fe-4S]-[ferredoxin] + 2 ATP + 2 H2O. It functions in the pathway porphyrin-containing compound metabolism; chlorophyll biosynthesis (light-independent). In terms of biological role, component of the dark-operative protochlorophyllide reductase (DPOR) that uses Mg-ATP and reduced ferredoxin to reduce ring D of protochlorophyllide (Pchlide) to form chlorophyllide a (Chlide). This reaction is light-independent. The L component serves as a unique electron donor to the NB-component of the complex, and binds Mg-ATP. The polypeptide is Light-independent protochlorophyllide reductase iron-sulfur ATP-binding protein (Trichodesmium erythraeum (strain IMS101)).